A 497-amino-acid chain; its full sequence is tRNA-2-methylthio-N(6)-dimethylallyladenosine synthase (497 aa).

The interval Met1 to Leu50 is disordered. Positions Gly48–Glu165 constitute an MTTase N-terminal domain. 6 residues coordinate [4Fe-4S] cluster: Cys57, Cys94, Cys128, Cys202, Cys206, and Cys209. Residues Arg188 to Asp430 form the Radical SAM core domain. The region spanning Lys433–Thr496 is the TRAM domain.

Belongs to the methylthiotransferase family. MiaB subfamily. In terms of assembly, monomer. [4Fe-4S] cluster serves as cofactor.

The protein resides in the cytoplasm. It catalyses the reaction N(6)-dimethylallyladenosine(37) in tRNA + (sulfur carrier)-SH + AH2 + 2 S-adenosyl-L-methionine = 2-methylsulfanyl-N(6)-dimethylallyladenosine(37) in tRNA + (sulfur carrier)-H + 5'-deoxyadenosine + L-methionine + A + S-adenosyl-L-homocysteine + 2 H(+). Its function is as follows. Catalyzes the methylthiolation of N6-(dimethylallyl)adenosine (i(6)A), leading to the formation of 2-methylthio-N6-(dimethylallyl)adenosine (ms(2)i(6)A) at position 37 in tRNAs that read codons beginning with uridine. In Xylella fastidiosa (strain M12), this protein is tRNA-2-methylthio-N(6)-dimethylallyladenosine synthase.